A 117-amino-acid polypeptide reads, in one-letter code: Large ribosomal subunit protein bL20c (117 aa).

This sequence belongs to the bacterial ribosomal protein bL20 family.

It localises to the plastid. The protein resides in the chloroplast. Its function is as follows. Binds directly to 23S ribosomal RNA and is necessary for the in vitro assembly process of the 50S ribosomal subunit. It is not involved in the protein synthesizing functions of that subunit. This chain is Large ribosomal subunit protein bL20c, found in Ceratophyllum demersum (Rigid hornwort).